We begin with the raw amino-acid sequence, 250 residues long: uncharacterized protein (250 aa).

The protein belongs to the carbohydrate kinase PfkB family.

This is an uncharacterized protein from Archaeoglobus fulgidus (strain ATCC 49558 / DSM 4304 / JCM 9628 / NBRC 100126 / VC-16).